Consider the following 483-residue polypeptide: MTSIRQLHQQLVNKEKTAVEIATEFLARIQALEPQVKSFLHLTPDLALAQAQKVDEKIARGESLHLLAGIPIALKDNLCTKGIPTTCASRILENFVPPYESTVTQKLRDLGAVIVGKTNLDEFAMGSSTENSGYHVTANPWDLSRVPGGSSGGSAAAVAAQECVVALGSDTGGSIRQPASFCGVVGLKPTYGLVSRFGLVAYASSLDQIGPFGRTVEDAAILLQAIAGYDPQDSTSLNLPIPDYSQFLKTSLKGLKIGVIKETFGEGLDQVVAEAVNQALAQLKALGATIKEISCPRFRYGLPTYYIIAPSEASANLARYDGVKYGIREDADSLIDMYTKTRAKGFGAEVKRRIMLGTYTLSAGYYDAYYLKAQKVRTLIKEDFDRAFQSVDVLVSPTSPTTAFKAGEKTADPLSMYLSDLMTIPVNLAGLPGLSLPCGFDGQGLPIGLQLVGNVLREDQLFHVAHAYEQATDWHKRQPSFTN.

Active-site charge relay system residues include K75 and S150. The active-site Acyl-ester intermediate is the S174.

This sequence belongs to the amidase family. GatA subfamily. Heterotrimer of A, B and C subunits.

The enzyme catalyses L-glutamyl-tRNA(Gln) + L-glutamine + ATP + H2O = L-glutaminyl-tRNA(Gln) + L-glutamate + ADP + phosphate + H(+). In terms of biological role, allows the formation of correctly charged Gln-tRNA(Gln) through the transamidation of misacylated Glu-tRNA(Gln) in organisms which lack glutaminyl-tRNA synthetase. The reaction takes place in the presence of glutamine and ATP through an activated gamma-phospho-Glu-tRNA(Gln). The chain is Glutamyl-tRNA(Gln) amidotransferase subunit A from Microcystis aeruginosa (strain NIES-843 / IAM M-2473).